Reading from the N-terminus, the 2555-residue chain is Squalestatin hexaketide synthase clz14 (2555 aa).

The disordered stretch occupies residues 1–84 (MDVSKEAGHH…PNATSTTTTT (84 aa)). The span at 10–84 (HANGFANGNT…PNATSTTTTT (75 aa)) shows a compositional bias: low complexity. The region spanning 91–511 (QVPVAICGIG…GSNTHIIIDS (421 aa)) is the Ketosynthase family 3 (KS3) domain. Active-site for beta-ketoacyl synthase activity residues include Cys-261, His-398, and His-435. Residues 611-928 (FIFTGQGAQW…LEGIGKLFCF (318 aa)) form a malonyl-CoA:ACP transacylase (MAT) domain region. Residues 975 to 1104 (HELLGERSLE…GLVTASVVTS (130 aa)) form an N-terminal hotdog fold region. The segment at 975 to 1256 (HELLGERSLE…RGFKCKKTDD (282 aa)) is dehydratase (DH) domain. The PKS/mFAS DH domain occupies 975–1260 (HELLGERSLE…CKKTDDAFIQ (286 aa)). His-1007 acts as the Proton acceptor; for dehydratase activity in catalysis. The tract at residues 1117–1260 (SRKVDTSRWY…CKKTDDAFIQ (144 aa)) is C-terminal hotdog fold. Residue Asp-1177 is the Proton donor; for dehydratase activity of the active site. The methyltransferase (CMet) domain stretch occupies residues 1424 to 1595 (SFFQAAGLNK…GFEGAGTVVL (172 aa)). Residues 1821–2141 (GMLNTLHWVG…RGVHMGRIVV (321 aa)) form an enoyl reductase (ER) (ER) domain region. The interval 2165 to 2338 (STYLLTGGMG…PASVIDIAAI (174 aa)) is ketoreductase (KR) domain. Positions 2468–2546 (IIFAQEIAKR…SLGRLATKRL (79 aa)) constitute a Carrier domain. An O-(pantetheine 4'-phosphoryl)serine modification is found at Ser-2505.

The protein operates within secondary metabolite biosynthesis. In terms of biological role, highly reducing polyketide synthase (HR-PKS); part of the gene cluster that mediates the biosynthesis of squalestatin S1 (SQS1, also known as zaragozic acid A), a heavily oxidized fungal polyketide that offers potent cholesterol lowering activity by targeting squalene synthase (SS). SQS1 is composed of a 2,8-dioxobicyclic[3.2.1]octane-3,4,5-tricarboxyclic acid core that is connected to two lipophilic polyketide arms. These initial steps feature the priming of an unusual benzoic acid starter unit onto the highly reducing polyketide synthase clz14, followed by oxaloacetate extension and product release to generate a tricarboxylic acid containing product. The phenylalanine ammonia lyase (PAL) clz10 and the acyl-CoA ligase clz12 are involved in transforming phenylalanine into benzoyl-CoA. The citrate synthase-like protein clz17 is involved in connecting the C-alpha-carbons of the hexaketide chain and oxaloacetate to afford the tricarboxylic acid unit. The potential hydrolytic enzymes, clz11 and clz13, are in close proximity to pks2 and may participate in product release. On the other side, the tetraketide arm is synthesized by a the squalestatin tetraketide synthase clz2 and enzymatically esterified to the core in the last biosynthetic step, by the acetyltransferase clz6. The biosynthesis of the tetraketide must involve 3 rounds of chain extension. After the first and second rounds methyl-transfer occurs, and in all rounds of extension the ketoreductase and dehydratase are active. The enoyl reductase and C-MeT of clz2 are not active in the final round of extension. The acetyltransferase clz6 appears to have a broad substrate selectivity for its acyl CoA substrate, allowing the in vitro synthesis of novel squalestatins. The biosynthesis of SQS1 requires several oxidative steps likely performed by oxidoreductases clz3, clz15 and clz16. Finally, in support of the identification of the cluster as being responsible for SQS1 production, the cluster contains a gene encoding a putative squalene synthase (SS) clz20, suggesting a likely mechanism for self-resistance. The polypeptide is Squalestatin hexaketide synthase clz14 (Cochliobolus lunatus (Filamentous fungus)).